The primary structure comprises 201 residues: Orotate phosphoribosyltransferase (201 aa).

113–121 contacts 5-phospho-alpha-D-ribose 1-diphosphate; that stretch reads EDIITTGKS. Positions 117 and 145 each coordinate orotate.

This sequence belongs to the purine/pyrimidine phosphoribosyltransferase family. PyrE subfamily. Homodimer. The cofactor is Mg(2+).

It carries out the reaction orotidine 5'-phosphate + diphosphate = orotate + 5-phospho-alpha-D-ribose 1-diphosphate. It participates in pyrimidine metabolism; UMP biosynthesis via de novo pathway; UMP from orotate: step 1/2. Catalyzes the transfer of a ribosyl phosphate group from 5-phosphoribose 1-diphosphate to orotate, leading to the formation of orotidine monophosphate (OMP). The chain is Orotate phosphoribosyltransferase from Helicobacter pylori (strain Shi470).